Consider the following 169-residue polypeptide: MSDHKRAVLAGGCFWGMQDLIRKQPGVVSTRVGYTGGQNDHPTYRNHPGHAEAIEIVYDPAQTDYRALLEFFFQIHDPTTKNRQGNDVGTSYRSEIFYVDDEQRRIALDTIADVDASGLWPGKVVTDVSPAPEFWEAEPEHQDYLERYPSGYTCHFPRPGWKLPKRAEV.

The active site involves Cys-13.

It belongs to the MsrA Met sulfoxide reductase family.

It carries out the reaction L-methionyl-[protein] + [thioredoxin]-disulfide + H2O = L-methionyl-(S)-S-oxide-[protein] + [thioredoxin]-dithiol. The enzyme catalyses [thioredoxin]-disulfide + L-methionine + H2O = L-methionine (S)-S-oxide + [thioredoxin]-dithiol. Has an important function as a repair enzyme for proteins that have been inactivated by oxidation. Catalyzes the reversible oxidation-reduction of methionine sulfoxide in proteins to methionine. This Mycolicibacterium vanbaalenii (strain DSM 7251 / JCM 13017 / BCRC 16820 / KCTC 9966 / NRRL B-24157 / PYR-1) (Mycobacterium vanbaalenii) protein is Peptide methionine sulfoxide reductase MsrA.